We begin with the raw amino-acid sequence, 245 residues long: 3-deoxy-manno-octulosonate cytidylyltransferase (245 aa).

This sequence belongs to the KdsB family.

The protein localises to the cytoplasm. It carries out the reaction 3-deoxy-alpha-D-manno-oct-2-ulosonate + CTP = CMP-3-deoxy-beta-D-manno-octulosonate + diphosphate. The protein operates within nucleotide-sugar biosynthesis; CMP-3-deoxy-D-manno-octulosonate biosynthesis; CMP-3-deoxy-D-manno-octulosonate from 3-deoxy-D-manno-octulosonate and CTP: step 1/1. It participates in bacterial outer membrane biogenesis; lipopolysaccharide biosynthesis. Activates KDO (a required 8-carbon sugar) for incorporation into bacterial lipopolysaccharide in Gram-negative bacteria. The polypeptide is 3-deoxy-manno-octulosonate cytidylyltransferase (Desulfatibacillum aliphaticivorans).